Reading from the N-terminus, the 830-residue chain is Isethionate sulfite-lyase (830 aa).

The PFL domain maps to 31–700 (KRVFKLLERF…VVSATPNGRV (670 aa)). 2-hydroxyethane-1-sulfonate-binding positions include Arg189, Gln193, 468–470 (CIE), and Arg678. Cys468 serves as the catalytic Cysteine radical intermediate. Glu470 functions as the Proton acceptor in the catalytic mechanism. Residues 707–830 (DGSSPSHGAD…LIARTGHDQM (124 aa)) form the Glycine radical domain. At Gly805 the chain carries Glycine radical.

The protein belongs to the glycyl radical enzyme (GRE) family. In terms of assembly, homodimer. Requires the activating protein IslB to generate the key active site glycyl radical on Gly-805 that is involved in catalysis.

The catalysed reaction is 2-hydroxyethane-1-sulfonate = acetaldehyde + sulfite + H(+). Its pathway is organosulfur degradation; alkanesulfonate degradation. Its function is as follows. Involved in an anaerobic respiration pathway that converts the sulfonate taurine (2-aminoethanesulfonate) to ammonia, acetate and sulfide. Catalyzes the radical-mediated C-S bond cleavage of isethionate (2-hydroxyethanesulfonate) to form sulfite and acetaldehyde. Is not able to use any alternate organosulfonate or (S)-1,2-propanediol or choline as a substrate, showing that this enzyme is highly specific for isethionate. In Bilophila wadsworthia (strain 3_1_6), this protein is Isethionate sulfite-lyase.